The primary structure comprises 2223 residues: Protein Ycf2 (2223 aa).

Gly1576–Ser1583 lines the ATP pocket.

Belongs to the Ycf2 family.

It localises to the plastid. The protein resides in the chloroplast stroma. Its function is as follows. Probable ATPase of unknown function. Its presence in a non-photosynthetic plant (Epifagus virginiana) and experiments in tobacco indicate that it has an essential function which is probably not related to photosynthesis. This is Protein Ycf2 from Silene latifolia (White campion).